A 270-amino-acid polypeptide reads, in one-letter code: Putative pyruvate, phosphate dikinase regulatory protein (270 aa).

151 to 158 (GVSRTSKT) is an ADP binding site.

Belongs to the pyruvate, phosphate/water dikinase regulatory protein family. PDRP subfamily.

The catalysed reaction is N(tele)-phospho-L-histidyl/L-threonyl-[pyruvate, phosphate dikinase] + ADP = N(tele)-phospho-L-histidyl/O-phospho-L-threonyl-[pyruvate, phosphate dikinase] + AMP + H(+). It catalyses the reaction N(tele)-phospho-L-histidyl/O-phospho-L-threonyl-[pyruvate, phosphate dikinase] + phosphate + H(+) = N(tele)-phospho-L-histidyl/L-threonyl-[pyruvate, phosphate dikinase] + diphosphate. Its function is as follows. Bifunctional serine/threonine kinase and phosphorylase involved in the regulation of the pyruvate, phosphate dikinase (PPDK) by catalyzing its phosphorylation/dephosphorylation. In Lysinibacillus sphaericus (strain C3-41), this protein is Putative pyruvate, phosphate dikinase regulatory protein.